We begin with the raw amino-acid sequence, 342 residues long: Dihydroorotase (342 aa).

2 residues coordinate Zn(2+): histidine 13 and histidine 15. Substrate contacts are provided by residues 15–17 (HLR) and asparagine 41. Zn(2+)-binding residues include lysine 98, histidine 135, and histidine 173. At lysine 98 the chain carries N6-carboxylysine. Substrate is bound at residue histidine 135. Leucine 218 contacts substrate. A Zn(2+)-binding site is contributed by aspartate 246. Aspartate 246 is an active-site residue. Substrate is bound by residues histidine 250 and alanine 262.

Belongs to the metallo-dependent hydrolases superfamily. DHOase family. Class II DHOase subfamily. As to quaternary structure, homodimer. It depends on Zn(2+) as a cofactor.

It carries out the reaction (S)-dihydroorotate + H2O = N-carbamoyl-L-aspartate + H(+). It participates in pyrimidine metabolism; UMP biosynthesis via de novo pathway; (S)-dihydroorotate from bicarbonate: step 3/3. In terms of biological role, catalyzes the reversible cyclization of carbamoyl aspartate to dihydroorotate. In Vibrio cholerae serotype O1 (strain ATCC 39315 / El Tor Inaba N16961), this protein is Dihydroorotase.